A 379-amino-acid chain; its full sequence is Sperm microtubule associated protein 2 (379 aa).

The interval 1–82 (MGDSRRRSLG…EFPETLDPKE (82 aa)) is disordered. Basic and acidic residues-rich tracts occupy residues 19 to 29 (GRSEREQDGDP) and 38 to 50 (ESRR…RQDL). Residues 56-76 (GPEDPEEELPPEEVAGEEFPE) are compositionally biased toward acidic residues. 6 THEG repeats span residues 118–137 (KARK…PKIN), 184–203 (TITV…PKRF), 222–241 (SSLE…PKIR), 258–277 (AAQM…PKAP), 290–309 (PKPH…PKAQ), and 326–345 (VTKK…PKVR). Ser295 carries the post-translational modification Phosphoserine. Positions 344-379 (VRKGLNEGYDRRPLASMSLPPPKASPEKCDQPRPGL) are disordered. Basic and acidic residues-rich tracts occupy residues 347–356 (GLNEGYDRRP) and 368–379 (SPEKCDQPRPGL).

As to quaternary structure, interacts with CCT5. In terms of tissue distribution, testis specific.

The protein localises to the nucleus. Its function is as follows. May be involved (but not essential) in spermatogenesis. The polypeptide is Sperm microtubule associated protein 2 (Homo sapiens (Human)).